A 490-amino-acid chain; its full sequence is Protein nucleotidyltransferase YdiU (490 aa).

The ATP site is built by G94, G96, R97, K117, D129, G130, R180, and R187. D256 functions as the Proton acceptor in the catalytic mechanism. Residues N257 and D266 each contribute to the Mg(2+) site. D266 contributes to the ATP binding site.

It belongs to the SELO family. Requires Mg(2+) as cofactor. It depends on Mn(2+) as a cofactor.

It carries out the reaction L-seryl-[protein] + ATP = 3-O-(5'-adenylyl)-L-seryl-[protein] + diphosphate. The enzyme catalyses L-threonyl-[protein] + ATP = 3-O-(5'-adenylyl)-L-threonyl-[protein] + diphosphate. It catalyses the reaction L-tyrosyl-[protein] + ATP = O-(5'-adenylyl)-L-tyrosyl-[protein] + diphosphate. The catalysed reaction is L-histidyl-[protein] + UTP = N(tele)-(5'-uridylyl)-L-histidyl-[protein] + diphosphate. It carries out the reaction L-seryl-[protein] + UTP = O-(5'-uridylyl)-L-seryl-[protein] + diphosphate. The enzyme catalyses L-tyrosyl-[protein] + UTP = O-(5'-uridylyl)-L-tyrosyl-[protein] + diphosphate. In terms of biological role, nucleotidyltransferase involved in the post-translational modification of proteins. It can catalyze the addition of adenosine monophosphate (AMP) or uridine monophosphate (UMP) to a protein, resulting in modifications known as AMPylation and UMPylation. This Clostridium perfringens (strain SM101 / Type A) protein is Protein nucleotidyltransferase YdiU.